The sequence spans 120 residues: NAD(P)H-quinone oxidoreductase subunit 3, chloroplastic (120 aa).

3 helical membrane-spanning segments follow: residues 9–29 (IFWAFLIISSVIPIFAFIISG), 60–80 (ICYYMFALVFVVFDVETVFLY), and 88–108 (ILGVSVFIEALIFVLILIVGS).

This sequence belongs to the complex I subunit 3 family. In terms of assembly, NDH is composed of at least 16 different subunits, 5 of which are encoded in the nucleus.

It localises to the plastid. The protein resides in the chloroplast thylakoid membrane. It catalyses the reaction a plastoquinone + NADH + (n+1) H(+)(in) = a plastoquinol + NAD(+) + n H(+)(out). The enzyme catalyses a plastoquinone + NADPH + (n+1) H(+)(in) = a plastoquinol + NADP(+) + n H(+)(out). In terms of biological role, NDH shuttles electrons from NAD(P)H:plastoquinone, via FMN and iron-sulfur (Fe-S) centers, to quinones in the photosynthetic chain and possibly in a chloroplast respiratory chain. The immediate electron acceptor for the enzyme in this species is believed to be plastoquinone. Couples the redox reaction to proton translocation, and thus conserves the redox energy in a proton gradient. The chain is NAD(P)H-quinone oxidoreductase subunit 3, chloroplastic from Morus indica (Mulberry).